Consider the following 384-residue polypeptide: UDP-galactopyranose mutase (384 aa).

Positions 1–23 are cleaved as a signal peptide; the sequence is MKSKKILIVGAGFSGAVIGRQLA. Residues Ser14, 33–34, Asn41, and 60–61 each bind FAD; these read DQ and HI. UDP-alpha-D-galactose is bound by residues Asn84, Phe151, Thr156, Trp160, and Tyr185. Phe219 contacts FAD. The UDP-alpha-D-galactose site is built by Asn270, Arg280, and Tyr314. Arg343 provides a ligand contact to FAD. Tyr349 contacts UDP-alpha-D-galactose. 350–355 contributes to the FAD binding site; it reads LDMDVT.

This sequence belongs to the UDP-galactopyranose/dTDP-fucopyranose mutase family. In terms of assembly, homodimer. The cofactor is FAD.

The catalysed reaction is UDP-alpha-D-galactose = UDP-alpha-D-galactofuranose. Its pathway is bacterial outer membrane biogenesis; LPS O-antigen biosynthesis. Functionally, involved in the biosynthesis of the galactose-containing O-side-chain polysaccharide backbone structure of D-galactan I which is a key component of lipopolysaccharide (LPS). Catalyzes the interconversion through a 2-keto intermediate of uridine diphosphogalactopyranose (UDP-GalP) into uridine diphosphogalactofuranose (UDP-GalF) which is the biosynthetic precursor of galactofuranosyl residues. The chain is UDP-galactopyranose mutase (rfbD) from Klebsiella pneumoniae.